Consider the following 887-residue polypeptide: Bifunctional uridylyltransferase/uridylyl-removing enzyme (887 aa).

Residues 1–337 (MINTSPLLNY…RLPNYERKIE (337 aa)) form a uridylyltransferase region. Residues 339–699 (VNDHFKIVDN…AHRKAAQDAV (361 aa)) form a uridylyl-removing region. The HD domain occupies 457-579 (VDAHTLLLLR…LGDMEHLDYL (123 aa)). ACT domains follow at residues 700–782 (QIFI…LMQR) and 809–887 (MVEI…ICQH).

This sequence belongs to the GlnD family. The cofactor is Mg(2+).

It catalyses the reaction [protein-PII]-L-tyrosine + UTP = [protein-PII]-uridylyl-L-tyrosine + diphosphate. It carries out the reaction [protein-PII]-uridylyl-L-tyrosine + H2O = [protein-PII]-L-tyrosine + UMP + H(+). With respect to regulation, uridylyltransferase (UTase) activity is inhibited by glutamine, while glutamine activates uridylyl-removing (UR) activity. Functionally, modifies, by uridylylation and deuridylylation, the PII regulatory proteins (GlnB and homologs), in response to the nitrogen status of the cell that GlnD senses through the glutamine level. Under low glutamine levels, catalyzes the conversion of the PII proteins and UTP to PII-UMP and PPi, while under higher glutamine levels, GlnD hydrolyzes PII-UMP to PII and UMP (deuridylylation). Thus, controls uridylylation state and activity of the PII proteins, and plays an important role in the regulation of nitrogen assimilation and metabolism. This chain is Bifunctional uridylyltransferase/uridylyl-removing enzyme, found in Acinetobacter baumannii (strain ATCC 17978 / DSM 105126 / CIP 53.77 / LMG 1025 / NCDC KC755 / 5377).